A 1342-amino-acid chain; its full sequence is DNA-directed RNA polymerase subunit beta (1342 aa).

The protein belongs to the RNA polymerase beta chain family. In terms of assembly, the RNAP catalytic core consists of 2 alpha, 1 beta, 1 beta' and 1 omega subunit. When a sigma factor is associated with the core the holoenzyme is formed, which can initiate transcription.

It carries out the reaction RNA(n) + a ribonucleoside 5'-triphosphate = RNA(n+1) + diphosphate. Its function is as follows. DNA-dependent RNA polymerase catalyzes the transcription of DNA into RNA using the four ribonucleoside triphosphates as substrates. The protein is DNA-directed RNA polymerase subunit beta of Glaesserella parasuis serovar 5 (strain SH0165) (Haemophilus parasuis).